Here is a 449-residue protein sequence, read N- to C-terminus: Methylenetetrahydrofolate--tRNA-(uracil-5-)-methyltransferase TrmFO (449 aa).

Residue 10–15 participates in FAD binding; that stretch reads GGGLAG.

It belongs to the MnmG family. TrmFO subfamily. FAD is required as a cofactor.

The protein localises to the cytoplasm. The catalysed reaction is uridine(54) in tRNA + (6R)-5,10-methylene-5,6,7,8-tetrahydrofolate + NADH + H(+) = 5-methyluridine(54) in tRNA + (6S)-5,6,7,8-tetrahydrofolate + NAD(+). The enzyme catalyses uridine(54) in tRNA + (6R)-5,10-methylene-5,6,7,8-tetrahydrofolate + NADPH + H(+) = 5-methyluridine(54) in tRNA + (6S)-5,6,7,8-tetrahydrofolate + NADP(+). Its function is as follows. Catalyzes the folate-dependent formation of 5-methyl-uridine at position 54 (M-5-U54) in all tRNAs. The polypeptide is Methylenetetrahydrofolate--tRNA-(uracil-5-)-methyltransferase TrmFO (Sphingopyxis alaskensis (strain DSM 13593 / LMG 18877 / RB2256) (Sphingomonas alaskensis)).